A 122-amino-acid chain; its full sequence is MIQTESRLEVADNTGAREVLCIKVLGGSKRRYAGIGDIIKVSVKEATPRGRVKKGEIYNAVVVRTAKGVRRQDGSLIKFDGNAAVLLNNKLEPIGTRIFGPVTRELRSERFMKIVSLAPEVL.

It belongs to the universal ribosomal protein uL14 family. In terms of assembly, part of the 50S ribosomal subunit. Forms a cluster with proteins L3 and L19. In the 70S ribosome, L14 and L19 interact and together make contacts with the 16S rRNA in bridges B5 and B8.

Its function is as follows. Binds to 23S rRNA. Forms part of two intersubunit bridges in the 70S ribosome. The polypeptide is Large ribosomal subunit protein uL14 (Burkholderia lata (strain ATCC 17760 / DSM 23089 / LMG 22485 / NCIMB 9086 / R18194 / 383)).